A 96-amino-acid chain; its full sequence is Small ribosomal subunit protein bS16 (96 aa).

Belongs to the bacterial ribosomal protein bS16 family.

This Oenococcus oeni (strain ATCC BAA-331 / PSU-1) protein is Small ribosomal subunit protein bS16.